A 181-amino-acid polypeptide reads, in one-letter code: NADH-quinone oxidoreductase subunit 2 (181 aa).

Positions 83, 87, 88, 124, and 128 each coordinate [2Fe-2S] cluster. Cys-144 and Cys-172 are joined by a disulfide.

This sequence belongs to the complex I 24 kDa subunit family. In terms of assembly, NDH-1 is composed of 15 different subunits, Nqo1 to Nqo15. The complex has a L-shaped structure, with the hydrophobic arm (subunits Nqo7, Nqo8 and Nqo10 to Nqo14) embedded in the membrane and the hydrophilic peripheral arm (subunits Nqo1 to Nqo6, Nqo9 and Nqo15) protruding into the bacterial cytoplasm. The hydrophilic domain contains all the redox centers. The cofactor is [2Fe-2S] cluster.

The protein localises to the cell membrane. It catalyses the reaction a quinone + NADH + 5 H(+)(in) = a quinol + NAD(+) + 4 H(+)(out). Functionally, NDH-1 shuttles electrons from NADH, via FMN and iron-sulfur (Fe-S) centers, to quinones in the respiratory chain. The immediate electron acceptor for the enzyme in this species is menaquinone. Couples the redox reaction to proton translocation (for every two electrons transferred, four hydrogen ions are translocated across the cytoplasmic membrane), and thus conserves the redox energy in a proton gradient required for the synthesis of ATP. This Thermus thermophilus (strain ATCC 27634 / DSM 579 / HB8) protein is NADH-quinone oxidoreductase subunit 2 (nqo2).